The primary structure comprises 961 residues: Gamma-tubulin small complex component GCP2 (961 aa).

Positions 15 to 76 (NLHRSPKLAT…KPSIPPLKSE (62 aa)) are disordered. A compositionally biased stretch (polar residues) spans 43–54 (LGSNVVSHPTRS). Basic and acidic residues predominate over residues 55 to 65 (SPEKTTDKPAD).

It belongs to the TUBGCP family. Component of the gamma-tubulin small complex (gamma-TuSC) composed of tubulin gamma chain, gamma-tubulin complex protein 2 (GCP2) and gamma-tubulin complex protein 3 (GCP3). Interacts with tubulin gamma chain.

It is found in the cytoplasm. The protein localises to the cytoskeleton. Its subcellular location is the flagellum axoneme. The protein resides in the flagellum basal body. In terms of biological role, component of the gamma-tubulin small complex (gamma-TuSC) involved in microtubule (MT) nucleation for the formation of median bodies and in the biogenesis of flagella. Gamma-TuSC may be required for the correct positioning of EB1 within the trophozoites. The protein is Gamma-tubulin small complex component GCP2 of Giardia intestinalis (strain ATCC 50803 / WB clone C6) (Giardia lamblia).